The sequence spans 273 residues: Large ribosomal subunit protein uL2 (273 aa).

The tract at residues 221 to 263 (RGTAMNPVDHPHGGGEGRNFGKHPVTPWGVQTKGKKTRHNKRT) is disordered. The segment covering 253–263 (KGKKTRHNKRT) has biased composition (basic residues).

This sequence belongs to the universal ribosomal protein uL2 family. As to quaternary structure, part of the 50S ribosomal subunit. Forms a bridge to the 30S subunit in the 70S ribosome.

In terms of biological role, one of the primary rRNA binding proteins. Required for association of the 30S and 50S subunits to form the 70S ribosome, for tRNA binding and peptide bond formation. It has been suggested to have peptidyltransferase activity; this is somewhat controversial. Makes several contacts with the 16S rRNA in the 70S ribosome. The protein is Large ribosomal subunit protein uL2 of Histophilus somni (strain 129Pt) (Haemophilus somnus).